We begin with the raw amino-acid sequence, 301 residues long: N-acetylmuramic acid 6-phosphate etherase (301 aa).

An SIS domain is found at 55-215; the sequence is IADALRAGGR…STISMVALGK (161 aa). Glutamate 83 serves as the catalytic Proton donor. Glutamate 111 is a catalytic residue.

The protein belongs to the GCKR-like family. MurNAc-6-P etherase subfamily. In terms of assembly, homodimer.

The catalysed reaction is N-acetyl-D-muramate 6-phosphate + H2O = N-acetyl-D-glucosamine 6-phosphate + (R)-lactate. The protein operates within amino-sugar metabolism; 1,6-anhydro-N-acetylmuramate degradation. It participates in amino-sugar metabolism; N-acetylmuramate degradation. It functions in the pathway cell wall biogenesis; peptidoglycan recycling. Functionally, specifically catalyzes the cleavage of the D-lactyl ether substituent of MurNAc 6-phosphate, producing GlcNAc 6-phosphate and D-lactate. Together with AnmK, is also required for the utilization of anhydro-N-acetylmuramic acid (anhMurNAc) either imported from the medium or derived from its own cell wall murein, and thus plays a role in cell wall recycling. This Burkholderia lata (strain ATCC 17760 / DSM 23089 / LMG 22485 / NCIMB 9086 / R18194 / 383) protein is N-acetylmuramic acid 6-phosphate etherase.